The sequence spans 186 residues: Probable chorismate pyruvate-lyase (186 aa).

3 residues coordinate substrate: Arg80, Leu118, and Glu170.

Belongs to the UbiC family.

Its subcellular location is the cytoplasm. It carries out the reaction chorismate = 4-hydroxybenzoate + pyruvate. The protein operates within cofactor biosynthesis; ubiquinone biosynthesis. Removes the pyruvyl group from chorismate, with concomitant aromatization of the ring, to provide 4-hydroxybenzoate (4HB) for the ubiquinone pathway. This Pseudomonas syringae pv. syringae (strain B728a) protein is Probable chorismate pyruvate-lyase.